Here is a 127-residue protein sequence, read N- to C-terminus: DNA-directed RNA polymerases I, II, and III subunit RPABC2 (127 aa).

Residues 1–32 are compositionally biased toward acidic residues; it reads MSDNEDNFDGDDFDDVEEDEGLDDLENAEEEG. The disordered stretch occupies residues 1–52; that stretch reads MSDNEDNFDGDDFDDVEEDEGLDDLENAEEEGQVNVEILPSGERPQANQKRI. Ser2 is subject to N-acetylserine. Position 2 is a phosphoserine; by CK2 (Ser2).

Belongs to the archaeal Rpo6/eukaryotic RPB6 RNA polymerase subunit family. Component of the RNA polymerase I (Pol I), RNA polymerase II (Pol II) and RNA polymerase III (Pol III) complexes consisting of at least 13, 12 and 17 subunits, respectively. Pol I complex consists of a ten-subunit catalytic core composed of POLR1A/RPA1, POLR1B/RPA2, POLR1C/RPAC1, POLR1D/RPAC2, POLR1H/RPA12, POLR2E/RPABC1, POLR2F/RPABC2, POLR2H/RPABC3, POLR2K/RPABC4 and POLR2L/RPABC5; a mobile stalk subunit POLR1F/RPA43 protruding from the core and additional subunits homologous to general transcription factors POLR1E/RPA49 and POLR1G/RPA34. Part of Pol I pre-initiation complex (PIC), in which Pol I core assembles with RRN3 and promoter-bound UTBF and SL1/TIF-IB complex. Pol II complex contains a ten-subunit catalytic core composed of POLR2A/RPB1, POLR2B/RPB2, POLR2C/RPB3, POLR2I/RPB9, POLR2J/RPB11, POLR2E/RPABC1, POLR2F/RPABC2, POLR2H/RPABC3, POLR2K/RPABC4 and POLR2L/RPABC5 and a mobile stalk composed of two subunits POLR2D/RPB4 and POLR2G/RPB7. Part of Pol II(G) complex, in which Pol II core associates with an additional subunit POLR2M; unlike conventional Pol II, Pol II(G) functions as a transcriptional repressor. Part of TBP-based Pol II pre-initiation complex (PIC), in which Pol II core assembles with general transcription factors and other specific initiation factors including GTF2E1, GTF2E2, GTF2F1, GTF2F2, TCEA1, ERCC2, ERCC3, GTF2H2, GTF2H3, GTF2H4, GTF2H5, GTF2A1, GTF2A2, GTF2B and TBP; this large multi-subunit PIC complex mediates DNA unwinding and targets Pol II core to the transcription start site where the first phosphodiester bond forms. Pol III complex consists of a ten-subunit catalytic core composed of POLR3A/RPC1, POLR3B/RPC2, POLR1C/RPAC1, POLR1D/RPAC2, POLR3K/RPC10, POLR2E/RPABC1, POLR2F/RPABC2, POLR2H/RPABC3, POLR2K/RPABC4 and POLR2L/RPABC5; a mobile stalk composed of two subunits POLR3H/RPC8 and CRCP/RPC9, protruding from the core and functioning primarily in transcription initiation; and additional subunits homologous to general transcription factors of the RNA polymerase II machinery, POLR3C/RPC3-POLR3F/RPC6-POLR3G/RPC7 heterotrimer required for transcription initiation and POLR3D/RPC4-POLR3E/RPC5 heterodimer involved in both transcription initiation and termination.

It is found in the nucleus. The protein localises to the nucleolus. In terms of biological role, DNA-dependent RNA polymerase catalyzes the transcription of DNA into RNA using the four ribonucleoside triphosphates as substrates. Common component of RNA polymerases I, II, and III which synthesize ribosomal RNA precursors, mRNA precursors and many functional non-coding RNAs, and small RNAs, such as 5S rRNA and tRNAs, respectively. Pol II is the central component of the basal RNA polymerase II transcription machinery. Pols are composed of mobile elements that move relative to each other. In Pol II, POLR2F/RPABC2 is part of the clamp element and together with parts of POLR2A/RPB1 and POLR2B/RPB2 forms a pocket to which the POLR2D/RPB4-POLR2G/RPB7 subcomplex binds. The sequence is that of DNA-directed RNA polymerases I, II, and III subunit RPABC2 (POLR2F) from Bos taurus (Bovine).